The sequence spans 883 residues: DNA mismatch repair protein MutS (883 aa).

The tract at residues 1–25 is disordered; sequence MSDSVAPDVPVIREGKNPAQHRDRT. The segment covering 11–25 has biased composition (basic and acidic residues); sequence VIREGKNPAQHRDRT. Position 664–671 (664–671) interacts with ATP; the sequence is GPNASGKS. The segment at 857–883 is disordered; that stretch reads RKGNTQPRARKSSAETEAKTQQFELPF.

It belongs to the DNA mismatch repair MutS family.

In terms of biological role, this protein is involved in the repair of mismatches in DNA. It is possible that it carries out the mismatch recognition step. This protein has a weak ATPase activity. This is DNA mismatch repair protein MutS from Acaryochloris marina (strain MBIC 11017).